Consider the following 173-residue polypeptide: Alpha-crystallin A chain (173 aa).

At methionine 1 the chain carries N-acetylmethionine. The region spanning 53-164 (NFLDSSNSGM…GDRSIPVTRD (112 aa)) is the sHSP domain. Residues histidine 101, glutamate 103, and histidine 108 each coordinate Zn(2+). Residues cysteine 132 and cysteine 143 are joined by a disulfide bond. Residues 143-173 (CGPKSGGSESGRGDRSIPVTRDDKTNSTPSS) are disordered. Basic and acidic residues predominate over residues 153–167 (GRGDRSIPVTRDDKT).

The protein belongs to the small heat shock protein (HSP20) family. In terms of assembly, heteropolymer composed of three CRYAA and one CRYAB subunits. Inter-subunit bridging via zinc ions enhances stability, which is crucial as there is no protein turn over in the lens. Zinc coordination is achieved at least by His-101, Glu-103 and His-108. His-101 and Glu-103 come from the same molecule within the oligomer, while His-108 residue is provided by another molecule. Can also form homodimers and homotetramers (dimers of dimers) which serve as the building blocks of homooligomers. Part of a complex required for lens intermediate filament formation composed of BFSP1, BFSP2 and CRYAA.

Its subcellular location is the cytoplasm. The protein resides in the nucleus. Its function is as follows. Contributes to the transparency and refractive index of the lens. May act as a chaperone, preventing aggregation of various proteins under a wide range of stress conditions. This Psalidodon fasciatus (Banded astyanax) protein is Alpha-crystallin A chain (cryaa).